Here is an 815-residue protein sequence, read N- to C-terminus: Sodium/hydrogen exchanger 1 (815 aa).

Over 1–98 the chain is Extracellular; sequence MVLRSGICGL…FPVLGIDYTH (98 aa). Threonine 42 carries O-linked (GalNAc...) threonine glycosylation. The tract at residues 42–79 is disordered; the sequence is TASTIRSSEPPRERSIGDVTTAPPEVTPESRPVNHSVT. O-linked (GalNAc...) serine glycosylation is present at serine 56. O-linked (GalNAc...) threonine glycosylation is found at threonine 61, threonine 62, and threonine 68. An N-linked (GlcNAc...) asparagine glycan is attached at asparagine 75. The chain crosses the membrane as a helical span at residues 99–121; sequence VRTPFEISLWILLACLMKIGFHV. At 122–130 the chain is on the cytoplasmic side; sequence IPTISSIVP. The chain crosses the membrane as a helical span at residues 131–148; that stretch reads ESCLLIVVGLLVGGLIKG. Over 149 to 158 the chain is Extracellular; it reads VGETPPFLQS. Residues 159 to 176 form a helical membrane-spanning segment; that stretch reads DVFFLFLLPPIILDAGYF. The Cytoplasmic portion of the chain corresponds to 177 to 186; that stretch reads LPLRQFTENL. The chain crosses the membrane as a helical span at residues 187-215; the sequence is GTILIFAVVGTLWNAFFLGGLMYAVCLVG. Over 216-222 the chain is Extracellular; that stretch reads GEQINNI. A helical transmembrane segment spans residues 223 to 249; that stretch reads GLLDNLLFGSIISAVDPVAVLAVFEEI. The Cytoplasmic segment spans residues 250–252; the sequence is HIN. The chain crosses the membrane as a helical span at residues 253-283; that stretch reads ELLHILVFGESLLNDAVTVVLYHLFEEFANY. The Extracellular segment spans residues 284–287; sequence EHVG. Residues 288–322 traverse the membrane as a helical segment; that stretch reads IVDIFLGFLSFFVVALGGVLVGVVYGVIAAFTSRF. Topologically, residues 323 to 328 are cytoplasmic; that stretch reads TSHIRV. A helical transmembrane segment spans residues 329 to 341; it reads IEPLFVFLYSYMA. The Extracellular portion of the chain corresponds to 342–350; it reads YLSAELFHL. Residues 351–371 form a helical membrane-spanning segment; it reads SGIMALIASGVVMRPYVEANI. The Cytoplasmic portion of the chain corresponds to 372–373; that stretch reads SH. The chain crosses the membrane as a helical span at residues 374-404; sequence KSHTTIKYFLKMWSSVSETLIFIFLGVSTVA. Over 405-410 the chain is Extracellular; the sequence is GSHHWN. The chain crosses the membrane as a helical span at residues 411–438; it reads WTFVISTLLFCLIARVLGVLGLTWFINK. At 439–444 the chain is on the cytoplasmic side; it reads FRIVKL. A helical transmembrane segment spans residues 445 to 469; sequence TPKDQFIIAYGGLRGAIAFSLGYLL. Residues 470-475 lie on the Extracellular side of the membrane; sequence DKKHFP. A helical membrane pass occupies residues 476–505; the sequence is MCDLFLTAIITVIFFTVFVQGMTIRPLVDL. The interval 503-545 is interaction with TESC; that stretch reads VDLLAVKKKQETKRSINEEIHTQFLDHLLTGIEDICGHYGHHH. Residues 506-815 lie on the Cytoplasmic side of the membrane; sequence LAVKKKQETK…EGEPFFPKGQ (310 aa). The tract at residues 509-516 is PI(4,5)P2-binding region; that stretch reads KKKQETKR. Positions 515-545 are interaction with CHP2; sequence KRSINEEIHTQFLDHLLTGIEDICGHYGHHH. The tract at residues 540–545 is confers pH-dependent PI(4,5)P2 binding; sequence HYGHHH. The interval 552–560 is PI(4,5)P2-binding region; that stretch reads RFNKKYVKK. Serine 599 and serine 602 each carry phosphoserine. Phosphothreonine is present on threonine 603. Phosphoserine is present on residues serine 605 and serine 648. Residues 633-815 are interaction with TESC; it reads KILRNNLQKT…EGEPFFPKGQ (183 aa). The interaction with CALM1 stretch occupies residues 633 to 815; the sequence is KILRNNLQKT…EGEPFFPKGQ (183 aa). The interaction with PPP3CA stretch occupies residues 684-687; sequence LTVP. Serine 693, serine 697, and serine 703 each carry phosphoserine. The interaction with PPP3CA stretch occupies residues 715–720; sequence PVITID. Serine 723, serine 726, and serine 729 each carry phosphoserine. The disordered stretch occupies residues 744–815; the sequence is LSRDPAKVAE…EGEPFFPKGQ (72 aa). Threonine 779 bears the Phosphothreonine mark. Over residues 782-791 the composition is skewed to polar residues; that stretch reads PSDSPSSQRI. Phosphoserine is present on residues serine 785, serine 787, and serine 796.

It belongs to the monovalent cation:proton antiporter 1 (CPA1) transporter (TC 2.A.36) family. As to quaternary structure, homodimer; dimerization is crucial for its function. Oligomer. Interacts with CALM1 in a calcium-dependent manner. Interacts with TESC. Interacts (via the C-terminal domain) with CHP1; the interaction occurs at the plasma membrane in a calcium-dependent manner and facilitates the maturation, cell surface expression, and function of SLC9A3. Interacts with CHP2; the interaction occurs in a calcium-dependent manner. Interacts with EZR; regulates the cytoskeletal interactions of SLC9A1 and promotes stress fiber formation. In terms of processing, O-glycosylated. Post-translationally, ubiquitinated, leading to its degradation by the proteasome. Ubiquitination is reduced by CHP1. Phosphorylation at Thr-779 increases SLC9A1 activity. Specifically dephosphorylated at Thr-779 by PPP3CA that negatively regulates SLC9A1 activity. Phosphorylation at Ser-648 by AKT1 reduces SLC9A1 binding to CALM1. In terms of processing, palmitoylated; may play a major role in SLC9A1 regulation. As to expression, kidney and intestine.

It localises to the cell membrane. The protein localises to the basolateral cell membrane. The enzyme catalyses Na(+)(in) + H(+)(out) = Na(+)(out) + H(+)(in). It carries out the reaction Li(+)(out) + H(+)(in) = Li(+)(in) + H(+)(out). The catalysed reaction is Li(+)(in) + Na(+)(out) = Li(+)(out) + Na(+)(in). Its activity is regulated as follows. Activated at acidic pHs. Inhibited by amiloride and 5-amino-substituted derivatives. Inhibited by cariporide and eniporide. Phosphatidylinositol 4,5-bisphosphate (PI(4,5)P2) and phosphatidylinositol 3,4,5-trisphosphate (PI(3,4,5)P3) bind and differentially regulate SLC9A1 activity. Electroneutral Na(+) /H(+) antiporter that extrudes Na(+) in exchange for external protons driven by the inward sodium ion chemical gradient, protecting cells from acidification that occurs from metabolism. Exchanges intracellular H(+) ions for extracellular Na(+) in 1:1 stoichiometry. Plays a key role in maintening intracellular pH neutral and cell volume, and thus is important for cell growth, proliferation, migration and survival. In addition, can transport lithium Li(+) and also functions as a Na(+)/Li(+) antiporter. SLC9A1 also functions in membrane anchoring and organization of scaffolding complexes that coordinate signaling inputs. The protein is Sodium/hydrogen exchanger 1 of Homo sapiens (Human).